The primary structure comprises 432 residues: Trigger factor (432 aa).

The region spanning 161 to 246 is the PPIase FKBP-type domain; sequence EDRVTIDFTG…LKKVEERELP (86 aa).

It belongs to the FKBP-type PPIase family. Tig subfamily.

Its subcellular location is the cytoplasm. The catalysed reaction is [protein]-peptidylproline (omega=180) = [protein]-peptidylproline (omega=0). Functionally, involved in protein export. Acts as a chaperone by maintaining the newly synthesized protein in an open conformation. Functions as a peptidyl-prolyl cis-trans isomerase. The protein is Trigger factor of Citrobacter koseri (strain ATCC BAA-895 / CDC 4225-83 / SGSC4696).